The sequence spans 340 residues: Uroporphyrinogen decarboxylase (340 aa).

Substrate-binding positions include 21-25 (RQAGR), aspartate 71, tyrosine 148, serine 203, and histidine 316.

Belongs to the uroporphyrinogen decarboxylase family. Homodimer.

It is found in the cytoplasm. The catalysed reaction is uroporphyrinogen III + 4 H(+) = coproporphyrinogen III + 4 CO2. It participates in porphyrin-containing compound metabolism; protoporphyrin-IX biosynthesis; coproporphyrinogen-III from 5-aminolevulinate: step 4/4. Functionally, catalyzes the decarboxylation of four acetate groups of uroporphyrinogen-III to yield coproporphyrinogen-III. The polypeptide is Uroporphyrinogen decarboxylase (Campylobacter lari (strain RM2100 / D67 / ATCC BAA-1060)).